The following is a 649-amino-acid chain: Threonine--tRNA ligase (649 aa).

The TGS domain occupies 1-60; that stretch reads MHVVLPDGKQLELPMGATALDAASAIGPRLAQDALAATANGELVDLMTPLPDGASITLIT. The tract at residues 248-544 is catalytic; that stretch reads DHRKLGRELE…LIEHYAGDFP (297 aa). Zn(2+) contacts are provided by C341, H392, and H521.

This sequence belongs to the class-II aminoacyl-tRNA synthetase family. In terms of assembly, homodimer. Requires Zn(2+) as cofactor.

It localises to the cytoplasm. It catalyses the reaction tRNA(Thr) + L-threonine + ATP = L-threonyl-tRNA(Thr) + AMP + diphosphate + H(+). In terms of biological role, catalyzes the attachment of threonine to tRNA(Thr) in a two-step reaction: L-threonine is first activated by ATP to form Thr-AMP and then transferred to the acceptor end of tRNA(Thr). Also edits incorrectly charged L-seryl-tRNA(Thr). The polypeptide is Threonine--tRNA ligase (Deinococcus deserti (strain DSM 17065 / CIP 109153 / LMG 22923 / VCD115)).